A 218-amino-acid chain; its full sequence is DNA-binding protein HU 2 (218 aa).

A bacterial histone-like domain region spans residues 1-91; the sequence is MNKAQLVEAI…QGFKDLVSGS (91 aa). The segment at 101 to 218 is disordered; it reads VKKAPKGSLS…TAKKATARKK (118 aa). The tract at residues 118–218 is degenerate repeats region; it reads KAAGKKAAAK…TAKKATARKK (101 aa). Over residues 127–161 the composition is skewed to low complexity; it reads KKATGAAKKTTGAAKKTSAAAKKTTAKKTTGAAKT. Residues 162 to 172 are compositionally biased toward basic residues; it reads TAKKTTAKKSA. A compositionally biased stretch (low complexity) spans 173-182; it reads AKTTTAAAKK. Basic residues predominate over residues 183 to 218; it reads TAAKKAPAKKATAKKAPAKKSTARKTTAKKATARKK.

Belongs to the bacterial histone-like protein family. Long actinobacterial subfamily. In terms of assembly, homodimer.

Its subcellular location is the cytoplasm. The protein resides in the nucleoid. Functionally, histone-like DNA-binding protein which is capable of wrapping DNA to stabilize it, and thus to prevent its denaturation under extreme environmental conditions. In Streptomyces coelicolor (strain ATCC BAA-471 / A3(2) / M145), this protein is DNA-binding protein HU 2 (hup2).